We begin with the raw amino-acid sequence, 128 residues long: Large ribosomal subunit protein uL22 (128 aa).

This sequence belongs to the universal ribosomal protein uL22 family. Part of the 50S ribosomal subunit.

Functionally, this protein binds specifically to 23S rRNA; its binding is stimulated by other ribosomal proteins, e.g. L4, L17, and L20. It is important during the early stages of 50S assembly. It makes multiple contacts with different domains of the 23S rRNA in the assembled 50S subunit and ribosome. In terms of biological role, the globular domain of the protein is located near the polypeptide exit tunnel on the outside of the subunit, while an extended beta-hairpin is found that lines the wall of the exit tunnel in the center of the 70S ribosome. The polypeptide is Large ribosomal subunit protein uL22 (Rhodopseudomonas palustris (strain HaA2)).